The sequence spans 631 residues: Eukaryotic translation initiation factor 2-alpha kinase 1 (631 aa).

The disordered stretch occupies residues 1-34 (MQGGNSGVRKREEEGGGEGAVAAPPAIDFPAESS). The short motif at 85–104 (LRSRQVFKLLCQTFIKMGLL) is the SIFI-degron element. Residues 167–583 (FEEVAILGKG…AVQLLQSELF (417 aa)) enclose the Protein kinase domain. ATP contacts are provided by residues 173–181 (LGKGGYGRV) and lysine 196. Residues 260–301 (QEEDREQYDVKNDESSSSSIVFAEPTPEKGKRFGESDTENQN) form a disordered region. Residue threonine 285 is modified to Phosphothreonine. Basic and acidic residues predominate over residues 285–301 (TPEKGKRFGESDTENQN). One copy of the HRM 1 repeat lies at 410 to 415 (ACPYVM). Aspartate 442 functions as the Proton acceptor in the catalytic mechanism. 2 positions are modified to phosphothreonine; by autocatalysis: threonine 486 and threonine 488. Residue threonine 493 is modified to Phosphothreonine. An HRM 2 repeat occupies 552 to 557 (RCPVQA).

The protein belongs to the protein kinase superfamily. Ser/Thr protein kinase family. GCN2 subfamily. In terms of assembly, synthesized in an inactive form that binds to the N-terminal domain of CDC37. Has to be associated with a multiprotein complex containing Hsp90, CDC37 and PPP5C for maturation and activation by autophosphorylation. The phosphatase PPP5C modulates this activation. Homodimer; homodimerizes in presence of heme, forming a disulfide-linked inactive homodimer. Interacts with DELE1; binds both to full-length DELE1 and processed form of DELE1 (S-DELE1) in response to stress, leading to activate its protein kinase activity and trigger the integrated stress response (ISR). Activated by autophosphorylation; phosphorylated predominantly on serine and threonine residues, but also on tyrosine residues. Autophosphorylation at Thr-488 is required for kinase activation. The active autophosphorylated form apparently is largely refractory to cellular heme fluctuations. Post-translationally, ubiquitinated and degraded by the SIFI complex once the mitochondrial stress has been resolved, thereby providing stress response silencing. Within the SIFI complex, UBR4 initiates ubiquitin chain that are further elongated or branched by KCMF1.

It is found in the cytoplasm. The enzyme catalyses L-seryl-[protein] + ATP = O-phospho-L-seryl-[protein] + ADP + H(+). The catalysed reaction is L-threonyl-[protein] + ATP = O-phospho-L-threonyl-[protein] + ADP + H(+). With respect to regulation, in normal conditions, the protein kinase activity is inhibited; inhibition is relieved by various stress conditions. Inhibited by heme: in presence of heme, forms a disulfide-linked inactive homodimer. Heme depletion relieves inhibition and stimulates kinase activity by autophosphorylation. Inhibited by the heme metabolites biliverdin and bilirubin. Induced by oxidative stress generated by arsenite treatment. Binding of nitric oxide (NO) to the heme iron in the N-terminal heme-binding domain activates the kinase activity, while binding of carbon monoxide (CO) suppresses kinase activity. Protein kinase activity is also activated upon binding to DELE1 in response to various stress, triggering the integrated stress response (ISR): activated by full-length DELE1 in response to iron deficiency, while it is activated by the processed form of DELE1 (S-DELE1) in response to mitochondrial stress. Its function is as follows. Metabolic-stress sensing protein kinase that phosphorylates the alpha subunit of eukaryotic translation initiation factor 2 (EIF2S1/eIF-2-alpha) in response to various stress conditions. Key activator of the integrated stress response (ISR) required for adaptation to various stress, such as heme deficiency, oxidative stress, osmotic shock, mitochondrial dysfunction and heat shock. EIF2S1/eIF-2-alpha phosphorylation in response to stress converts EIF2S1/eIF-2-alpha in a global protein synthesis inhibitor, leading to a global attenuation of cap-dependent translation, while concomitantly initiating the preferential translation of ISR-specific mRNAs, such as the transcriptional activator ATF4, and hence allowing ATF4-mediated reprogramming. Acts as a key sensor of heme-deficiency: in normal conditions, binds hemin via a cysteine thiolate and histidine nitrogenous coordination, leading to inhibit the protein kinase activity. This binding occurs with moderate affinity, allowing it to sense the heme concentration within the cell: heme depletion relieves inhibition and stimulates kinase activity, activating the ISR. Thanks to this unique heme-sensing capacity, plays a crucial role to shut off protein synthesis during acute heme-deficient conditions. In red blood cells (RBCs), controls hemoglobin synthesis ensuring a coordinated regulation of the synthesis of its heme and globin moieties. It thereby plays an essential protective role for RBC survival in anemias of iron deficiency. Iron deficiency also triggers activation by full-length DELE1. Also activates the ISR in response to mitochondrial dysfunction: HRI/EIF2AK1 protein kinase activity is activated upon binding to the processed form of DELE1 (S-DELE1), thereby promoting the ATF4-mediated reprogramming. Also acts as an activator of mitophagy in response to mitochondrial damage: catalyzes phosphorylation of eIF-2-alpha (EIF2S1) following activation by S-DELE1, thereby promoting mitochondrial localization of EIF2S1, triggering PRKN-independent mitophagy. This is Eukaryotic translation initiation factor 2-alpha kinase 1 from Macaca fascicularis (Crab-eating macaque).